The following is a 493-amino-acid chain: Alpha-amylase-related protein (493 aa).

The signal sequence occupies residues 1–19 (MFKFALTQTLCLAGSLSLA). Position 20 is a pyrrolidone carboxylic acid (Gln-20). Cys-47 and Cys-103 are disulfide-bonded. Residues Asn-117, Gln-168, and Asp-177 each contribute to the Ca(2+) site. An intrachain disulfide couples Cys-156 to Cys-170. Arg-205 is a binding site for chloride. Asp-207 functions as the Nucleophile in the catalytic mechanism. His-211 is a binding site for Ca(2+). Catalysis depends on Glu-244, which acts as the Proton donor. Residues Asn-307 and Arg-342 each coordinate chloride. Disulfide bonds link Cys-375–Cys-381, Cys-417–Cys-440, and Cys-447–Cys-459.

This sequence belongs to the glycosyl hydrolase 13 family. In terms of assembly, monomer. Requires Ca(2+) as cofactor. It depends on chloride as a cofactor.

It localises to the secreted. It carries out the reaction Endohydrolysis of (1-&gt;4)-alpha-D-glucosidic linkages in polysaccharides containing three or more (1-&gt;4)-alpha-linked D-glucose units.. The polypeptide is Alpha-amylase-related protein (Amyrel) (Drosophila mauritiana (Fruit fly)).